The chain runs to 577 residues: Proline--tRNA ligase (577 aa).

Belongs to the class-II aminoacyl-tRNA synthetase family. ProS type 1 subfamily. In terms of assembly, homodimer.

Its subcellular location is the cytoplasm. The catalysed reaction is tRNA(Pro) + L-proline + ATP = L-prolyl-tRNA(Pro) + AMP + diphosphate. Catalyzes the attachment of proline to tRNA(Pro) in a two-step reaction: proline is first activated by ATP to form Pro-AMP and then transferred to the acceptor end of tRNA(Pro). As ProRS can inadvertently accommodate and process non-cognate amino acids such as alanine and cysteine, to avoid such errors it has two additional distinct editing activities against alanine. One activity is designated as 'pretransfer' editing and involves the tRNA(Pro)-independent hydrolysis of activated Ala-AMP. The other activity is designated 'posttransfer' editing and involves deacylation of mischarged Ala-tRNA(Pro). The misacylated Cys-tRNA(Pro) is not edited by ProRS. In Herminiimonas arsenicoxydans, this protein is Proline--tRNA ligase.